The chain runs to 257 residues: Imidazole glycerol phosphate synthase subunit HisF (257 aa).

Active-site residues include D12 and D131.

The protein belongs to the HisA/HisF family. Heterodimer of HisH and HisF.

Its subcellular location is the cytoplasm. The catalysed reaction is 5-[(5-phospho-1-deoxy-D-ribulos-1-ylimino)methylamino]-1-(5-phospho-beta-D-ribosyl)imidazole-4-carboxamide + L-glutamine = D-erythro-1-(imidazol-4-yl)glycerol 3-phosphate + 5-amino-1-(5-phospho-beta-D-ribosyl)imidazole-4-carboxamide + L-glutamate + H(+). It participates in amino-acid biosynthesis; L-histidine biosynthesis; L-histidine from 5-phospho-alpha-D-ribose 1-diphosphate: step 5/9. IGPS catalyzes the conversion of PRFAR and glutamine to IGP, AICAR and glutamate. The HisF subunit catalyzes the cyclization activity that produces IGP and AICAR from PRFAR using the ammonia provided by the HisH subunit. In Burkholderia orbicola (strain MC0-3), this protein is Imidazole glycerol phosphate synthase subunit HisF.